The sequence spans 302 residues: Ribose-5-phosphate isomerase (302 aa).

This sequence belongs to the ribose 5-phosphate isomerase family.

The protein localises to the cytoplasm. It carries out the reaction aldehydo-D-ribose 5-phosphate = D-ribulose 5-phosphate. Its pathway is carbohydrate degradation; pentose phosphate pathway; D-ribose 5-phosphate from D-ribulose 5-phosphate (non-oxidative stage): step 1/1. In Cryptococcus neoformans var. neoformans serotype D (strain B-3501A) (Filobasidiella neoformans), this protein is Ribose-5-phosphate isomerase (RKI1).